The chain runs to 129 residues: UPF0344 protein MW0851 (129 aa).

4 helical membrane passes run 1-21 (MLHL…ATYL), 36-56 (LHMI…WILI), 67-87 (MLLT…EVSI), and 99-119 (MFWI…ILPL).

It belongs to the UPF0344 family.

It is found in the cell membrane. This chain is UPF0344 protein MW0851, found in Staphylococcus aureus (strain MW2).